The chain runs to 440 residues: Translation initiation factor eIF2B subunit gamma (440 aa).

It belongs to the eIF-2B gamma/epsilon subunits family. In terms of assembly, component of the translation initiation factor 2B (eIF2B) complex which is a heterodecamer of two sets of five different subunits: alpha, beta, gamma, delta and epsilon. Subunits alpha, beta and delta comprise a regulatory subcomplex and subunits epsilon and gamma comprise a catalytic subcomplex. Within the complex, the hexameric regulatory complex resides at the center, with the two heterodimeric catalytic subcomplexes bound on opposite sides.

It localises to the cytoplasm. The protein resides in the cytosol. Its function is as follows. Acts as a component of the translation initiation factor 2B (eIF2B) complex, which catalyzes the exchange of GDP for GTP on the eukaryotic initiation factor 2 (eIF2) complex gamma subunit. Its guanine nucleotide exchange factor activity is repressed when bound to eIF2 complex phosphorylated on the alpha subunit, thereby limiting the amount of methionyl-initiator methionine tRNA available to the ribosome and consequently global translation is repressed. The protein is Translation initiation factor eIF2B subunit gamma (eif2b3) of Dictyostelium discoideum (Social amoeba).